A 365-amino-acid chain; its full sequence is Peptide chain release factor 2 (365 aa).

An N5-methylglutamine modification is found at Q251.

It belongs to the prokaryotic/mitochondrial release factor family. Post-translationally, methylated by PrmC. Methylation increases the termination efficiency of RF2.

It localises to the cytoplasm. Peptide chain release factor 2 directs the termination of translation in response to the peptide chain termination codons UGA and UAA. The polypeptide is Peptide chain release factor 2 (Neorickettsia sennetsu (strain ATCC VR-367 / Miyayama) (Ehrlichia sennetsu)).